Consider the following 111-residue polypeptide: Flagellar hook-basal body complex protein FliE (111 aa).

This sequence belongs to the FliE family.

Its subcellular location is the bacterial flagellum basal body. The chain is Flagellar hook-basal body complex protein FliE from Brucella ovis (strain ATCC 25840 / 63/290 / NCTC 10512).